We begin with the raw amino-acid sequence, 147 residues long: MFDFGFSELIVIAVVTLIVVGPERLPKVARTAGHLLGRLQRYVSDVKSDIKREMQLEELKALQQQVEQQARELESSMRGEAAKIEADVNKTVAEVKSGVTVDAAPVPLTHAVEAPAAPAPMSLAPHGDAASAGREPAAVPGSGPEKA.

A helical membrane pass occupies residues 1–21; it reads MFDFGFSELIVIAVVTLIVVG. Positions 117–147 are disordered; it reads APAPMSLAPHGDAASAGREPAAVPGSGPEKA.

It belongs to the TatB family. In terms of assembly, the Tat system comprises two distinct complexes: a TatABC complex, containing multiple copies of TatA, TatB and TatC subunits, and a separate TatA complex, containing only TatA subunits. Substrates initially bind to the TatABC complex, which probably triggers association of the separate TatA complex to form the active translocon.

It is found in the cell inner membrane. Functionally, part of the twin-arginine translocation (Tat) system that transports large folded proteins containing a characteristic twin-arginine motif in their signal peptide across membranes. Together with TatC, TatB is part of a receptor directly interacting with Tat signal peptides. TatB may form an oligomeric binding site that transiently accommodates folded Tat precursor proteins before their translocation. This is Sec-independent protein translocase protein TatB from Aromatoleum aromaticum (strain DSM 19018 / LMG 30748 / EbN1) (Azoarcus sp. (strain EbN1)).